The sequence spans 574 residues: Sulfate adenylyltransferase (574 aa).

Residues 1–169 are N-terminal; the sequence is MANSPHGGVL…IEAVNKLNHY (169 aa). A catalytic region spans residues 170–394; that stretch reads DYVALRYSPA…LRESSPPRAT (225 aa). Gln197 serves as a coordination point for sulfate. Residues 197-200 and 291-294 contribute to the ATP site; these read QTRN and GRDH. Active-site residues include Thr198, Arg199, and Asn200. Arg199 lines the sulfate pocket. Ala295 contributes to the sulfate binding site. Residue Val333 participates in ATP binding. The tract at residues 395–574 is allosteric regulation domain; adenylyl-sulfate kinase-like; that stretch reads QGFTIFLTGY…LESEGYFDRL (180 aa). 3'-phosphoadenylyl sulfate-binding positions include 434-437, Arg451, 477-478, and Arg516; these read DTVR and IA.

This sequence in the N-terminal section; belongs to the sulfate adenylyltransferase family. It in the C-terminal section; belongs to the APS kinase family. As to quaternary structure, homohexamer. Dimer of trimers.

The protein localises to the cytoplasm. The enzyme catalyses sulfate + ATP + H(+) = adenosine 5'-phosphosulfate + diphosphate. Its pathway is sulfur metabolism; hydrogen sulfide biosynthesis; sulfite from sulfate: step 1/3. Allosterically inhibited by 3'-phosphoadenosine 5'-phosphosulfate (PAPS). In terms of biological role, catalyzes the first intracellular reaction of sulfate assimilation, forming adenosine-5'-phosphosulfate (APS) from inorganic sulfate and ATP. Plays an important role in sulfate activation as a component of the biosynthesis pathway of sulfur-containing amino acids. The sequence is that of Sulfate adenylyltransferase from Aspergillus terreus (strain NIH 2624 / FGSC A1156).